A 1080-amino-acid chain; its full sequence is Headcase protein (1080 aa).

Disordered regions lie at residues 1-27 (MAPR…LQQQ), 181-277 (IYLN…GNNG), 310-335 (SLSS…ISVS), 655-693 (PLES…QPPK), 798-826 (SKYQ…QHAT), 891-916 (SGCS…DGSK), and 940-974 (QRQQ…NGWS). Polar residues predominate over residues 181–197 (IYLNGSGNRPTLANGSL). Residues 218-228 (NGGGGGGGAGV) show a composition bias toward gly residues. Positions 232–251 (TKTPLSNNNGNSYAGLTPNP) are enriched in polar residues. Residues 263–277 (NNGNTASNGSSGNNG) are compositionally biased toward low complexity. Positions 663–688 (GATTTQVPNAQGSPTASGCSSNTIAS) are enriched in polar residues. Residues 801 to 826 (QQQQHQQQQQQRQQQHNLQPQQQHAT) are compositionally biased toward low complexity. Over residues 900-913 (QPSLSPTASSNGND) the composition is skewed to polar residues. Low complexity predominate over residues 941–974 (RQQPPQQQVPQQQPHAASPTASLTSSSSSSNGWS).

In terms of tissue distribution, expressed in all imaginal cells of the embryo and larvae. Expressed in a subset of tracheal fusion cells from stage 14 to the end of embryogenesis in metameres 2-9, lateral trunk and ventral anastomoses.

The protein resides in the cytoplasm. Its function is as follows. Required for imaginal cell differentiation, may be involved in hormonal responsiveness during metamorphosis. Involved in an inhibitory signaling mechanism to determine the number of cells that will form unicellular sprouts in the trachea. Regulated by transcription factor esg. The longer hdc protein is completely functional and the shorter protein carries some function. The polypeptide is Headcase protein (Drosophila melanogaster (Fruit fly)).